The primary structure comprises 191 residues: MKAVVSKLYCSSMEEVMVVRRRPHVVNGGGFVVTDYKEKIVFKIDGCGVLGTKGELVLRDSDGNDLLLIHKKGGVVQALSIHNKWKGYSYDYQGSPKPVFTLRDPKHSCFSITSSIRISVGPGNCYFDVKGYFPDRDCSIVDSKGNVIAQVKEWIGSRDIYKVVTKPSVDKAFVFGVIAVLDYIYGESTSC.

The protein belongs to the LOR family.

Might be related to the phospholipid scramblase and tubby-like superfamily of membrane tethered transcription factors. The chain is Protein LURP-one-related 6 from Arabidopsis thaliana (Mouse-ear cress).